Reading from the N-terminus, the 784-residue chain is Receptor-like protein 38 (784 aa).

The N-terminal stretch at 1 to 30 (MIRSQSYCFLGITITIYFFFCLLPLPNTFA) is a signal peptide. The Extracellular segment spans residues 31–752 (SPPTQSLCRH…SELEEPVLNW (722 aa)). 5 LRR repeats span residues 109–133 (LQHL…IENL), 134–157 (SHLT…IGNL), 158–180 (NQLE…SFAN), 182–204 (TKLS…LSNL), and 205–227 (TSLA…DLSG). N-linked (GlcNAc...) asparagine glycosylation occurs at Asn-132. N-linked (GlcNAc...) asparagine glycosylation is found at Asn-180, Asn-193, and Asn-203. The stretch at 228–251 (LHNLEQIFGNENSFVGLFPASLLK) is one LRR 6; degenerate repeat. LRR repeat units lie at residues 252 to 276 (ISSL…NTSS), 278 to 301 (SRLT…LSKL), 302 to 324 (VNLE…SISK), 326 to 349 (VNLT…IWKP), 351 to 373 (NLQS…EVVN), 374 to 400 (GAKL…NFRF), 402 to 422 (FFLD…LKNS), 423 to 446 (TDFN…CMDS), 447 to 470 (TMLR…LMNC), and 472 to 496 (DMEF…SRKS). N-linked (GlcNAc...) asparagine glycosylation occurs at Asn-273. Asn-327 is a glycosylation site (N-linked (GlcNAc...) asparagine). 2 N-linked (GlcNAc...) asparagine glycosylation sites follow: Asn-421 and Asn-432. Residues 497–518 (LMVLVLRSNAFYGPVYNSTTYL) form an LRR 17; degenerate repeat. N-linked (GlcNAc...) asparagine glycans are attached at residues Asn-513, Asn-544, and Asn-562. An LRR 18 repeat occupies 520 to 544 (FPRLSIIDISNNDFVGSLPQDYFAN). LRR repeat units follow at residues 608–632 (FRGF…IGLL), 633–656 (SELL…LANI), 657–680 (TNLE…LGNL), and 682–705 (FLSN…QFGT). N-linked (GlcNAc...) asparagine glycosylation is found at Asn-639, Asn-655, Asn-668, Asn-679, Asn-687, and Asn-707. A helical membrane pass occupies residues 753 to 773 (IAAAIAFGPGVFCGFVIGHIF). The Cytoplasmic portion of the chain corresponds to 774–784 (TSYKHLWFIAR).

The protein belongs to the RLP family.

Its subcellular location is the cell membrane. The polypeptide is Receptor-like protein 38 (Arabidopsis thaliana (Mouse-ear cress)).